A 313-amino-acid polypeptide reads, in one-letter code: Formimidoylglutamase (313 aa).

Residues His130, Asp155, His157, Asp159, Asp241, and Asp243 each contribute to the Mn(2+) site.

This sequence belongs to the arginase family. It depends on Mn(2+) as a cofactor.

It carries out the reaction N-formimidoyl-L-glutamate + H2O = formamide + L-glutamate. It functions in the pathway amino-acid degradation; L-histidine degradation into L-glutamate; L-glutamate from N-formimidoyl-L-glutamate (hydrolase route): step 1/1. Functionally, catalyzes the conversion of N-formimidoyl-L-glutamate to L-glutamate and formamide. This is Formimidoylglutamase from Salmonella agona (strain SL483).